A 259-amino-acid polypeptide reads, in one-letter code: Protein odd-skipped-related 1 (259 aa).

3 consecutive C2H2-type zinc fingers follow at residues 168–190, 196–218, and 224–246; these read FVCK…ERTH, YTCD…RYIH, and FKCQ…KTLH.

Belongs to the Odd C2H2-type zinc-finger protein family.

It is found in the nucleus. Its function is as follows. Transcriptional repressor. Required for pronephric kidney development. The protein is Protein odd-skipped-related 1 of Xenopus tropicalis (Western clawed frog).